A 177-amino-acid chain; its full sequence is tRNA-splicing endonuclease (177 aa).

Active-site residues include Tyr114, His123, and Lys154.

The protein belongs to the tRNA-intron endonuclease family. Archaeal short subfamily. In terms of assembly, homotetramer; although the tetramer contains four active sites, only two participate in the cleavage. Therefore, it should be considered as a dimer of dimers.

The enzyme catalyses pretRNA = a 3'-half-tRNA molecule with a 5'-OH end + a 5'-half-tRNA molecule with a 2',3'-cyclic phosphate end + an intron with a 2',3'-cyclic phosphate and a 5'-hydroxyl terminus.. Its function is as follows. Endonuclease that removes tRNA introns. Cleaves pre-tRNA at the 5'- and 3'-splice sites to release the intron. The products are an intron and two tRNA half-molecules bearing 2',3' cyclic phosphate and 5'-OH termini. Recognizes a pseudosymmetric substrate in which 2 bulged loops of 3 bases are separated by a stem of 4 bp. This is tRNA-splicing endonuclease from Methanococcus vannielii (strain ATCC 35089 / DSM 1224 / JCM 13029 / OCM 148 / SB).